The following is a 370-amino-acid chain: Alanine racemase (370 aa).

Lys-39 serves as the catalytic Proton acceptor; specific for D-alanine. Lys-39 carries the post-translational modification N6-(pyridoxal phosphate)lysine. Arg-137 serves as a coordination point for substrate. Tyr-258 acts as the Proton acceptor; specific for L-alanine in catalysis. Met-306 contributes to the substrate binding site.

The protein belongs to the alanine racemase family. The cofactor is pyridoxal 5'-phosphate.

The catalysed reaction is L-alanine = D-alanine. It participates in amino-acid biosynthesis; D-alanine biosynthesis; D-alanine from L-alanine: step 1/1. Catalyzes the interconversion of L-alanine and D-alanine. May also act on other amino acids. The chain is Alanine racemase (alr) from Methylobacterium nodulans (strain LMG 21967 / CNCM I-2342 / ORS 2060).